The sequence spans 250 residues: UDP-2,3-diacylglucosamine hydrolase (250 aa).

Residues Asp-8, His-10, Asp-41, Asn-79, and His-114 each coordinate Mn(2+). 79-80 contacts substrate; that stretch reads NR. Substrate is bound by residues Asp-122, Ser-160, Asp-172, Gln-175, and His-203. Mn(2+) is bound by residues His-203 and His-205.

It belongs to the LpxH family. Mn(2+) serves as cofactor.

The protein resides in the cell inner membrane. The enzyme catalyses UDP-2-N,3-O-bis[(3R)-3-hydroxytetradecanoyl]-alpha-D-glucosamine + H2O = 2-N,3-O-bis[(3R)-3-hydroxytetradecanoyl]-alpha-D-glucosaminyl 1-phosphate + UMP + 2 H(+). It participates in glycolipid biosynthesis; lipid IV(A) biosynthesis; lipid IV(A) from (3R)-3-hydroxytetradecanoyl-[acyl-carrier-protein] and UDP-N-acetyl-alpha-D-glucosamine: step 4/6. Hydrolyzes the pyrophosphate bond of UDP-2,3-diacylglucosamine to yield 2,3-diacylglucosamine 1-phosphate (lipid X) and UMP by catalyzing the attack of water at the alpha-P atom. Involved in the biosynthesis of lipid A, a phosphorylated glycolipid that anchors the lipopolysaccharide to the outer membrane of the cell. The sequence is that of UDP-2,3-diacylglucosamine hydrolase from Xylella fastidiosa (strain M23).